The chain runs to 462 residues: UDP-N-acetylmuramate--L-alanine ligase (462 aa).

An ATP-binding site is contributed by 114 to 120; sequence GSHGKTT.

It belongs to the MurCDEF family.

It localises to the cytoplasm. It catalyses the reaction UDP-N-acetyl-alpha-D-muramate + L-alanine + ATP = UDP-N-acetyl-alpha-D-muramoyl-L-alanine + ADP + phosphate + H(+). It functions in the pathway cell wall biogenesis; peptidoglycan biosynthesis. Its function is as follows. Cell wall formation. The protein is UDP-N-acetylmuramate--L-alanine ligase of Brachyspira hyodysenteriae (strain ATCC 49526 / WA1).